A 337-amino-acid polypeptide reads, in one-letter code: Pyrophosphate--fructose 6-phosphate 1-phosphotransferase (337 aa).

Gly-10 lines the diphosphate pocket. Position 101 (Asp-101) interacts with Mg(2+). Substrate contacts are provided by residues 124–126 (TID), Arg-161, 168–170 (MGR), Glu-220, Arg-257, and 263–266 (HTIR). Catalysis depends on Asp-126, which acts as the Proton acceptor.

Belongs to the phosphofructokinase type A (PFKA) family. Mixed-substrate PFK group III subfamily. As to quaternary structure, homodimer or homotrimer. Requires Mg(2+) as cofactor.

The protein resides in the cytoplasm. It catalyses the reaction beta-D-fructose 6-phosphate + diphosphate = beta-D-fructose 1,6-bisphosphate + phosphate + H(+). It participates in carbohydrate degradation; glycolysis; D-glyceraldehyde 3-phosphate and glycerone phosphate from D-glucose: step 3/4. Non-allosteric. Its function is as follows. Catalyzes the phosphorylation of D-fructose 6-phosphate, the first committing step of glycolysis. Uses inorganic phosphate (PPi) as phosphoryl donor instead of ATP like common ATP-dependent phosphofructokinases (ATP-PFKs), which renders the reaction reversible, and can thus function both in glycolysis and gluconeogenesis. Consistently, PPi-PFK can replace the enzymes of both the forward (ATP-PFK) and reverse (fructose-bisphosphatase (FBPase)) reactions. This chain is Pyrophosphate--fructose 6-phosphate 1-phosphotransferase, found in Thermoproteus tenax (strain ATCC 35583 / DSM 2078 / JCM 9277 / NBRC 100435 / Kra 1).